A 612-amino-acid chain; its full sequence is Methionine--tRNA ligase (612 aa).

Positions Pro-12–His-22 match the 'HIGH' region motif. 4 residues coordinate Zn(2+): Cys-144, Cys-147, Cys-157, and Cys-160. The 'KMSKS' region motif lies at Lys-348–Ser-352. Ser-351 provides a ligand contact to ATP.

The protein belongs to the class-I aminoacyl-tRNA synthetase family. MetG type 1 subfamily. In terms of assembly, monomer. Zn(2+) serves as cofactor.

Its subcellular location is the cytoplasm. The catalysed reaction is tRNA(Met) + L-methionine + ATP = L-methionyl-tRNA(Met) + AMP + diphosphate. In terms of biological role, is required not only for elongation of protein synthesis but also for the initiation of all mRNA translation through initiator tRNA(fMet) aminoacylation. In Corynebacterium kroppenstedtii (strain DSM 44385 / JCM 11950 / CIP 105744 / CCUG 35717), this protein is Methionine--tRNA ligase.